A 278-amino-acid chain; its full sequence is Putative cysteine-rich repeat secretory protein 17 (278 aa).

A signal peptide spans 1-32 (MYSLSSVSKHLILVHILALVATQLLLIRSVSS). Gnk2-homologous domains follow at residues 39 to 142 (YLNH…SIDN) and 148 to 265 (YGDS…LYPF).

Belongs to the cysteine-rich repeat secretory protein family.

It localises to the secreted. The sequence is that of Putative cysteine-rich repeat secretory protein 17 (CRRSP17) from Arabidopsis thaliana (Mouse-ear cress).